We begin with the raw amino-acid sequence, 245 residues long: Ribonuclease 3 (245 aa).

Residues 24-146 enclose the RNase III domain; it reads YTVFSQKLGY…IIGAIYLESG (123 aa). Glu59 contacts Mg(2+). Asp63 is a catalytic residue. Residues Asn132 and Glu135 each coordinate Mg(2+). The active site involves Glu135. A DRBM domain is found at 173–243; that stretch reads DPKTLLQEYL…ARRAYKLAVV (71 aa).

This sequence belongs to the ribonuclease III family. As to quaternary structure, homodimer. The cofactor is Mg(2+).

It localises to the cytoplasm. The catalysed reaction is Endonucleolytic cleavage to 5'-phosphomonoester.. Digests double-stranded RNA. Involved in the processing of primary rRNA transcript to yield the immediate precursors to the large and small rRNAs (23S and 16S). Processes some mRNAs, and tRNAs when they are encoded in the rRNA operon. Processes pre-crRNA and tracrRNA of type II CRISPR loci if present in the organism. The chain is Ribonuclease 3 from Nitrosomonas eutropha (strain DSM 101675 / C91 / Nm57).